We begin with the raw amino-acid sequence, 421 residues long: Glycosaminoglycan xylosylkinase homolog (421 aa).

The N-terminal stretch at 1-21 (MNKRSVIIAGIVASLLGLALG) is a signal peptide. Residue Asn-83 is glycosylated (N-linked (GlcNAc...) asparagine). Gln-131 and Lys-147 together coordinate ATP. Residue Asp-166 coordinates Mn(2+). Intrachain disulfides connect Cys-225–Cys-240 and Cys-230–Cys-233. Residue 252–255 (IYIV) participates in ATP binding. 2 cysteine pairs are disulfide-bonded: Cys-285/Cys-351 and Cys-352/Cys-409. Residue Asp-314 is part of the active site. Positions 319 and 329 each coordinate ATP. Asp-329 is a Mn(2+) binding site.

Belongs to the FAM20 family. Mn(2+) serves as cofactor.

It localises to the golgi apparatus. The protein resides in the endoplasmic reticulum. It carries out the reaction 3-O-(beta-D-galactosyl-(1-&gt;3)-beta-D-galactosyl-(1-&gt;4)-beta-D-xylosyl)-L-seryl-[protein] + ATP = 3-O-(beta-D-galactosyl-(1-&gt;3)-beta-D-galactosyl-(1-&gt;4)-beta-D-2-O-phosphoxylosyl)-L-seryl-[protein] + ADP + H(+). In terms of biological role, kylose kinase that mediates the 2-O-phosphorylation of xylose in the glycosaminoglycan-protein linkage region of proteoglycans. This chain is Glycosaminoglycan xylosylkinase homolog, found in Drosophila melanogaster (Fruit fly).